The chain runs to 558 residues: Dihydroxy-acid dehydratase (558 aa).

Residue Asp-81 coordinates Mg(2+). Cys-122 provides a ligand contact to [2Fe-2S] cluster. Positions 123 and 124 each coordinate Mg(2+). An N6-carboxylysine modification is found at Lys-124. Cys-195 lines the [2Fe-2S] cluster pocket. Glu-447 lines the Mg(2+) pocket. Ser-473 functions as the Proton acceptor in the catalytic mechanism.

It belongs to the IlvD/Edd family. Homodimer. [2Fe-2S] cluster serves as cofactor. The cofactor is Mg(2+).

It catalyses the reaction (2R)-2,3-dihydroxy-3-methylbutanoate = 3-methyl-2-oxobutanoate + H2O. The enzyme catalyses (2R,3R)-2,3-dihydroxy-3-methylpentanoate = (S)-3-methyl-2-oxopentanoate + H2O. It functions in the pathway amino-acid biosynthesis; L-isoleucine biosynthesis; L-isoleucine from 2-oxobutanoate: step 3/4. The protein operates within amino-acid biosynthesis; L-valine biosynthesis; L-valine from pyruvate: step 3/4. Functions in the biosynthesis of branched-chain amino acids. Catalyzes the dehydration of (2R,3R)-2,3-dihydroxy-3-methylpentanoate (2,3-dihydroxy-3-methylvalerate) into 2-oxo-3-methylpentanoate (2-oxo-3-methylvalerate) and of (2R)-2,3-dihydroxy-3-methylbutanoate (2,3-dihydroxyisovalerate) into 2-oxo-3-methylbutanoate (2-oxoisovalerate), the penultimate precursor to L-isoleucine and L-valine, respectively. This chain is Dihydroxy-acid dehydratase, found in Bacillus subtilis (strain 168).